A 200-amino-acid chain; its full sequence is Small ribosomal subunit protein uS4 (200 aa).

Residues 92 to 155 (SRLDAVVYSL…QKLNIIVESV (64 aa)) enclose the S4 RNA-binding domain.

The protein belongs to the universal ribosomal protein uS4 family. In terms of assembly, part of the 30S ribosomal subunit. Contacts protein S5. The interaction surface between S4 and S5 is involved in control of translational fidelity.

One of the primary rRNA binding proteins, it binds directly to 16S rRNA where it nucleates assembly of the body of the 30S subunit. In terms of biological role, with S5 and S12 plays an important role in translational accuracy. In Staphylococcus aureus (strain JH9), this protein is Small ribosomal subunit protein uS4.